The chain runs to 360 residues: Ethanolamine-phosphate cytidylyltransferase (360 aa).

CTP contacts are provided by residues 207 to 208 (GF), 215 to 218 (HTEA), Lys243, 291 to 294 (HGDD), and 321 to 325 (HTEGL).

This sequence belongs to the cytidylyltransferase family.

It catalyses the reaction phosphoethanolamine + CTP + H(+) = CDP-ethanolamine + diphosphate. It functions in the pathway phospholipid metabolism; phosphatidylethanolamine biosynthesis; phosphatidylethanolamine from ethanolamine: step 2/3. In terms of biological role, ethanolamine-phosphate cytidylyltransferase that catalyzes the second step in the synthesis of phosphatidylethanolamine (PE) from ethanolamine via the CDP-ethanolamine pathway. The protein is Ethanolamine-phosphate cytidylyltransferase (pctA) of Dictyostelium discoideum (Social amoeba).